Reading from the N-terminus, the 121-residue chain is MSITKDQILEALAAMSVMEVVELIEAMEEKFGVSAAAAVVSGGGEAAAAEEKTEFDVILTSHGANKVAVIKALRGATGLGLKEAKTMAESSPIAVKEAISKEEADALKADLEAAGAEVEIK.

This sequence belongs to the bacterial ribosomal protein bL12 family. Homodimer. Part of the ribosomal stalk of the 50S ribosomal subunit. Forms a multimeric L10(L12)X complex, where L10 forms an elongated spine to which 2 to 4 L12 dimers bind in a sequential fashion. Binds GTP-bound translation factors.

In terms of biological role, forms part of the ribosomal stalk which helps the ribosome interact with GTP-bound translation factors. Is thus essential for accurate translation. The chain is Large ribosomal subunit protein bL12 from Shewanella halifaxensis (strain HAW-EB4).